The chain runs to 513 residues: Xylose import ATP-binding protein XylG (513 aa).

2 consecutive ABC transporter domains span residues 5 to 242 (LEMK…VGRE) and 259 to 505 (LRVE…LRSE). Residue 37–44 (GENGSGKS) participates in ATP binding.

Belongs to the ABC transporter superfamily. Xylose importer (TC 3.A.1.2.4) family. The complex is composed of two ATP-binding proteins (XylG), two transmembrane proteins (XylH) and a solute-binding protein (XylF).

Its subcellular location is the cell inner membrane. The enzyme catalyses D-xylose(out) + ATP + H2O = D-xylose(in) + ADP + phosphate + H(+). Its function is as follows. Part of the ABC transporter complex XylFGH involved in xylose import. Responsible for energy coupling to the transport system. This Pectobacterium atrosepticum (strain SCRI 1043 / ATCC BAA-672) (Erwinia carotovora subsp. atroseptica) protein is Xylose import ATP-binding protein XylG.